The sequence spans 246 residues: Sensory transduction protein LytT (246 aa).

The region spanning 3–117 (KVLVVDDEML…RIVQTLKKYK (115 aa)) is the Response regulatory domain. The HTH LytTR-type domain maps to 142 to 246 (LALPIEESIV…AKELKKLLRI (105 aa)).

Phosphorylated by LytS.

It localises to the cytoplasm. Member of the two-component regulatory system LytS/LytT that probably regulates genes involved in cell wall metabolism. In Bacillus cereus (strain ATCC 14579 / DSM 31 / CCUG 7414 / JCM 2152 / NBRC 15305 / NCIMB 9373 / NCTC 2599 / NRRL B-3711), this protein is Sensory transduction protein LytT (lytT).